Here is a 704-residue protein sequence, read N- to C-terminus: SH3KBP1-binding protein 1 (704 aa).

Residue Ala-2 is modified to N-acetylalanine. The region spanning 19–88 (EVIHLNVGGK…LRTKELDPRG (70 aa)) is the BTB domain. The interval 145-165 (LVGPQQAGGRPAPVRRSNTMP) is disordered. Phosphothreonine is present on Thr-163. 5 WD repeats span residues 233–280 (RLDW…GGSE), 283–322 (VFHL…WQVQ), 324–359 (VQPI…LRMK), 428–466 (VHRS…GMIS), and 548–586 (LECE…DGLG). Residues 611–644 (ASSRGSLPSPSPRTSLTSLHSAFSNTSLSSRRGS) show a composition bias toward low complexity. The segment at 611 to 704 (ASSRGSLPSP…PKTKLNETSF (94 aa)) is disordered. The PXXXPR motif lies at 618-623 (PSPSPR). Phosphoserine is present on residues Ser-644 and Ser-646. A PXXXPR motif is present at residues 678–683 (PTPAPR).

This sequence belongs to the KCTD3 family. Monomer. Interacts with CUL3; interaction is direct and forms a 5:5 heterodecamer. Interacts (via PXXXPR motifs) with SH3KBP1 (via SH3 domains). Directly interacts with cathepsin B/CTSB.

The protein resides in the lysosome. Inhibits CBL-SH3KBP1 complex mediated down-regulation of EGFR signaling by sequestration of SH3KBP1. Binds to SH3KBP1 and prevents its interaction with CBL and inhibits translocation of SH3KBP1 to EGFR containing vesicles upon EGF stimulation. This is SH3KBP1-binding protein 1 (SHKBP1) from Bos taurus (Bovine).